We begin with the raw amino-acid sequence, 248 residues long: Probable transcriptional regulatory protein Mchl_0946 (248 aa).

The protein belongs to the TACO1 family.

The protein localises to the cytoplasm. This is Probable transcriptional regulatory protein Mchl_0946 from Methylorubrum extorquens (strain CM4 / NCIMB 13688) (Methylobacterium extorquens).